Here is a 777-residue protein sequence, read N- to C-terminus: Lon protease (777 aa).

The region spanning Ile11–Ile204 is the Lon N-terminal domain. An ATP-binding site is contributed by Gly356 to Thr363. The Lon proteolytic domain maps to Leu592–Asn773. Catalysis depends on residues Ser679 and Lys722.

The protein belongs to the peptidase S16 family. As to quaternary structure, homohexamer. Organized in a ring with a central cavity.

The protein resides in the cytoplasm. The enzyme catalyses Hydrolysis of proteins in presence of ATP.. ATP-dependent serine protease that mediates the selective degradation of mutant and abnormal proteins as well as certain short-lived regulatory proteins. Required for cellular homeostasis and for survival from DNA damage and developmental changes induced by stress. Degrades polypeptides processively to yield small peptide fragments that are 5 to 10 amino acids long. Binds to DNA in a double-stranded, site-specific manner. In Buchnera aphidicola subsp. Schizaphis graminum (strain Sg), this protein is Lon protease.